A 592-amino-acid polypeptide reads, in one-letter code: Transcription factor MYC3 (592 aa).

Residues Ser82–Asp141 are JAZ-interaction domain. 4 disordered regions span residues Glu261–Gln313, Cys341–Gly361, Glu393–Gln422, and Gln465–Ser508. Low complexity predominate over residues Ser278–Lys293. A compositionally biased stretch (basic and acidic residues) spans Ser294–Asp306. Positions Val352 to Gly361 are enriched in polar residues. The span at Lys398–Ala407 shows a compositional bias: basic residues. Basic and acidic residues-rich tracts occupy residues Asn408–Gln422 and Glu468–Ser482. One can recognise a bHLH domain in the interval Glu411–Leu460.

In terms of assembly, homo- and heterodimer. Interacts with MYB28, MYB29, MYB34, MYB51, MYB76, MYB122, MYC2, MYC4, AFPH2/NINJA and the JAZ repressors TIFY10A/JAZ1, TIFY10B/JAZ2, TIFY6B/JAZ3, TIFY11A/JAZ5, TIFY11B/JAZ6, TIFY5B/JAZ7, TIFY5A/JAZ8, TIFY7/JAZ9, TIFY9/JAZ10, TIFY3A/JAZ11 and TIFY3B/JAZ12. In terms of tissue distribution, constitutively expressed in roots, stems, leaves, flowers, and seedlings.

It localises to the nucleus. Its function is as follows. Transcription factor involved in tryptophan, jasmonic acid (JA) and other stress-responsive gene regulation. With MYC2 and MYC4, controls additively subsets of JA-dependent responses. Can form complexes with all known glucosinolate-related MYBs to regulate glucosinolate biosynthesis. Binds to the G-box (5'-CACGTG-3') of promoters. Activates multiple TIFY/JAZ promoters. The sequence is that of Transcription factor MYC3 (MYC3) from Arabidopsis thaliana (Mouse-ear cress).